Reading from the N-terminus, the 860-residue chain is Leucine--tRNA ligase (860 aa).

The 'HIGH' region signature appears at 42–52 (PYPSGRLHMGH). The 'KMSKS' region signature appears at 619–623 (KMSKS). An ATP-binding site is contributed by Lys-622.

The protein belongs to the class-I aminoacyl-tRNA synthetase family.

It is found in the cytoplasm. The catalysed reaction is tRNA(Leu) + L-leucine + ATP = L-leucyl-tRNA(Leu) + AMP + diphosphate. This Cronobacter sakazakii (strain ATCC BAA-894) (Enterobacter sakazakii) protein is Leucine--tRNA ligase.